A 222-amino-acid chain; its full sequence is Putative N-acetylmannosamine-6-phosphate 2-epimerase (222 aa).

Belongs to the NanE family.

The enzyme catalyses an N-acyl-D-glucosamine 6-phosphate = an N-acyl-D-mannosamine 6-phosphate. The protein operates within amino-sugar metabolism; N-acetylneuraminate degradation; D-fructose 6-phosphate from N-acetylneuraminate: step 3/5. Its function is as follows. Converts N-acetylmannosamine-6-phosphate (ManNAc-6-P) to N-acetylglucosamine-6-phosphate (GlcNAc-6-P). The protein is Putative N-acetylmannosamine-6-phosphate 2-epimerase of Staphylococcus aureus (strain Mu3 / ATCC 700698).